A 297-amino-acid polypeptide reads, in one-letter code: 4-hydroxy-tetrahydrodipicolinate synthase (297 aa).

Thr-47 is a binding site for pyruvate. Tyr-135 functions as the Proton donor/acceptor in the catalytic mechanism. Lys-163 acts as the Schiff-base intermediate with substrate in catalysis. Ile-205 is a pyruvate binding site.

It belongs to the DapA family. Homotetramer; dimer of dimers.

The protein resides in the cytoplasm. The enzyme catalyses L-aspartate 4-semialdehyde + pyruvate = (2S,4S)-4-hydroxy-2,3,4,5-tetrahydrodipicolinate + H2O + H(+). Its pathway is amino-acid biosynthesis; L-lysine biosynthesis via DAP pathway; (S)-tetrahydrodipicolinate from L-aspartate: step 3/4. In terms of biological role, catalyzes the condensation of (S)-aspartate-beta-semialdehyde [(S)-ASA] and pyruvate to 4-hydroxy-tetrahydrodipicolinate (HTPA). This Dehalococcoides mccartyi (strain ATCC BAA-2100 / JCM 16839 / KCTC 5957 / BAV1) protein is 4-hydroxy-tetrahydrodipicolinate synthase.